The sequence spans 411 residues: Protrudin (411 aa).

Positions 1 to 27 are disordered; that stretch reads MQTSEREGSGPELSPSVMPEAPLESPP. Over 1 to 66 the chain is Cytoplasmic; that stretch reads MQTSEREGSG…AGDGVRYLLR (66 aa). The interval 1–92 is sufficient for homooligomerization; sequence MQTSEREGSG…LFLTLNEGAW (92 aa). Positions 1 to 205 are sufficient for localization to endoplasmic reticulum tubular network and for interactions with REEP1, REEP5, ATL1, ATL2, ATL3 and SPAST; that stretch reads MQTSEREGSG…LYLLPLCWVL (205 aa). A necessary for interaction with RAB11A and function in neurite outgrowth region spans residues 51–64; sequence LEPLKDAGDGVRYL. A helical transmembrane segment spans residues 67–87; that stretch reads WQMPLCSLLTCLGLNVLFLTL. Position 88 (N88) is a topological domain, lumenal. A helical membrane pass occupies residues 89 to 109; that stretch reads EGAWYSVGALMISVPALLGYL. Over 110–187 the chain is Cytoplasmic; the sequence is QEVCRARLPD…NPVVSSQFYG (78 aa). The helical intramembrane region spans 188 to 208; it reads ALLGTVCMLYLLPLCWVLTLL. Residues 209–411 are Cytoplasmic-facing; the sequence is NSTLFLGNVE…CASCNQTLSK (203 aa). Positions 234 to 286 are disordered; that stretch reads MNPKQEEHAFESPPPPDVGGKDGLMDSTPALTPTEDLTPGSVEEAEEAEPDEE. Positions 271–361 are necessary for interaction with KIF5A; the sequence is TPGSVEEAEE…GCSATFSVLK (91 aa). Acidic residues predominate over residues 276-286; it reads EEAEEAEPDEE. The interval 286–292 is necessary for interaction with VAPA and function in cell projections formation; it reads EFKDAIE. The FYVE-type zinc finger occupies 344 to 410; it reads TNNFGNCTGC…VCASCNQTLS (67 aa). Positions 350, 353, 366, 369, 374, 377, 402, and 405 each coordinate Zn(2+).

Can form homooligomers (monomers, dimers and tetramers). Interacts with RAB11A (GDP-bound form); regulates RAB11A. Interacts with FKBP8; may negatively regulate ZFYVE27 phosphorylation. Interacts with VAPA (via MSP domain); may regulate ZFYVE27 retention in the endoplasmic reticulum and its function in cell projections formation. Interacts with VAPB (via MSP domain). Interacts with REEP1, REEP5 and ATL1. Interacts with ATL2, ATL3 and SPAST. Interacts with KIF5A and RTN3. Interacts with RAB11B (GDP-bound form), SURF4, KIF5B and KIF5C. Phosphorylated. Phosphorylation is induced by NGF through the MAPK/ERK pathway and modulates interaction with RAB11A.

Its subcellular location is the recycling endosome membrane. The protein resides in the endoplasmic reticulum membrane. The protein localises to the cell projection. It is found in the growth cone membrane. Key regulator of RAB11-dependent vesicular trafficking during neurite extension through polarized membrane transport. Promotes axonal elongation and contributes to the establishment of neuronal cell polarity. Involved in nerve growth factor-induced neurite formation in VAPA-dependent manner. Contributes to both the formation and stabilization of the tubular ER network. Involved in ER morphogenesis by regulating the sheet-to-tubule balance and possibly the density of tubule interconnections. Acts as an adapter protein and facilitates the interaction of KIF5A with VAPA, VAPB, SURF4, RAB11A, RAB11B and RTN3 and the ZFYVE27-KIF5A complex contributes to the transport of these proteins in neurons. Can induce formation of neurite-like membrane protrusions in non-neuronal cells in a KIF5A/B-dependent manner. The chain is Protrudin (ZFYVE27) from Homo sapiens (Human).